The chain runs to 888 residues: ETO1-like protein 1 (888 aa).

The BTB domain occupies 180-280; sequence KNVVFKIGEE…ACDRELASLI (101 aa). TPR repeat units follow at residues 381 to 414, 441 to 477, 511 to 544, 637 to 670, and 711 to 744; these read VLGF…GHVY, SSVS…DPTL, LECL…CPDY, HERL…KRSF, and GQAL…RHTR. The stretch at 755-793 forms a coiled coil; sequence LRNDKAAAYEEMTRLIEKAQNNASAYEKRSEYCDRELAK. TPR repeat units lie at residues 807 to 840 and 842 to 873; these read VYPY…KADL and LLHL…DPNH.

This sequence belongs to the ETO1 family. In terms of assembly, interacts with the C-terminal domain of ACS4, ACS5 and ACS9. Predominantly expressed in flowers.

Its pathway is protein modification; protein ubiquitination. In terms of biological role, possible regulator of the ethylene pathway, which acts by regulating the stability of 1-aminocyclopropane-1-carboxylate synthase (ACS) enzymes. May act as a substrate-specific adapter that connects ACS enzymes, such as ACS5, to ubiquitin ligase complexes, leading to proteasomal degradation of ACS enzymes. In Arabidopsis thaliana (Mouse-ear cress), this protein is ETO1-like protein 1 (EOL1).